A 75-amino-acid chain; its full sequence is Movement protein TGBp3 (75 aa).

Residues Met1–Arg2 are Lumenal-facing. Residues Val3–Val23 form a helical membrane-spanning segment. The Cytoplasmic portion of the chain corresponds to Ser24 to Trp75.

The protein belongs to the Tymovirales TGBp3 protein family.

It localises to the host endoplasmic reticulum membrane. Plays a role in viral cell-to-cell propagation, by facilitating genome transport to neighboring plant cells through plasmosdesmata. May induce the formation of granular vesicles derived from the Endoplasmic reticulum, which align on actin filaments. The polypeptide is Movement protein TGBp3 (Strawberry mild yellow edge-associated virus (SMYEaV)).